The following is a 156-amino-acid chain: Small ribosomal subunit protein bS16 (156 aa).

Low complexity predominate over residues 124–135 (AAKAAEAETPAE). Residues 124–156 (AAKAAEAETPAEVQHDDEKVELADVEESAPESV) are disordered. Over residues 136–145 (VQHDDEKVEL) the composition is skewed to basic and acidic residues. Over residues 146-156 (ADVEESAPESV) the composition is skewed to acidic residues.

Belongs to the bacterial ribosomal protein bS16 family.

This is Small ribosomal subunit protein bS16 from Bifidobacterium animalis subsp. lactis (strain AD011).